A 169-amino-acid chain; its full sequence is Holo-[acyl-carrier-protein] synthase (169 aa).

Positions 8 and 50 each coordinate Mg(2+).

The protein belongs to the P-Pant transferase superfamily. AcpS family. It depends on Mg(2+) as a cofactor.

It is found in the cytoplasm. It carries out the reaction apo-[ACP] + CoA = holo-[ACP] + adenosine 3',5'-bisphosphate + H(+). Its function is as follows. Transfers the 4'-phosphopantetheine moiety from coenzyme A to a Ser of acyl-carrier-protein. In Thermotoga maritima (strain ATCC 43589 / DSM 3109 / JCM 10099 / NBRC 100826 / MSB8), this protein is Holo-[acyl-carrier-protein] synthase.